A 206-amino-acid polypeptide reads, in one-letter code: Large ribosomal subunit protein uL4 (206 aa).

Residues 46–77 (GTRAQKDREQVRHSTKKPFKQKGTGNARAGMT) form a disordered region.

Belongs to the universal ribosomal protein uL4 family. In terms of assembly, part of the 50S ribosomal subunit.

Its function is as follows. One of the primary rRNA binding proteins, this protein initially binds near the 5'-end of the 23S rRNA. It is important during the early stages of 50S assembly. It makes multiple contacts with different domains of the 23S rRNA in the assembled 50S subunit and ribosome. Forms part of the polypeptide exit tunnel. The chain is Large ribosomal subunit protein uL4 from Paracidovorax citrulli (strain AAC00-1) (Acidovorax citrulli).